Here is a 574-residue protein sequence, read N- to C-terminus: Calcium-dependent protein kinase 9 (574 aa).

The tract at residues 1–64 (MGNTCCVAPA…RARAKPNPYD (64 aa)) is disordered. Residue G2 is the site of N-myristoyl glycine attachment. The span at 28–40 (KSPAPSATTTTAT) shows a compositional bias: low complexity. The region spanning 101–359 (YQLGRELGRG…AQQVLDHPWL (259 aa)) is the Protein kinase domain. Residues 107–115 (LGRGEFGVT) and K130 contribute to the ATP site. The active-site Proton acceptor is D225. The autoinhibitory domain stretch occupies residues 365–395 (APNVPLGDVVRARLKQFSLMNRLKKKAMRVI). EF-hand domains are found at residues 402-437 (EEVE…VGSK), 438-473 (LAEP…LQRL), 474-509 (SNDN…DSGH), and 510-545 (ADDA…GTDW). Positions 415, 417, 419, 421, 426, 451, 453, 455, 457, 462, 487, 489, 491, 493, 498, 523, 525, 527, 529, and 534 each coordinate Ca(2+).

The protein belongs to the protein kinase superfamily. Ser/Thr protein kinase family. CDPK subfamily. As to expression, expressed in leaf blades and stems. Expressed at low levels in anthers and spikelets.

The protein resides in the membrane. The catalysed reaction is L-seryl-[protein] + ATP = O-phospho-L-seryl-[protein] + ADP + H(+). It catalyses the reaction L-threonyl-[protein] + ATP = O-phospho-L-threonyl-[protein] + ADP + H(+). With respect to regulation, activated by calcium. Autophosphorylation may play an important role in the regulation of the kinase activity. May play a role in signal transduction pathways that involve calcium as a second messenger. Functions in signal transduction pathways that positively regulate responses to drought, osmotic, and dehydration stress. Regulates expression of stress-associated genes in response to drought. Involved in tolerance to drought stress by increasing proline and soluble sugars, and improving stomatal closure. Required for pollen maturation and spikelet fertility. The protein is Calcium-dependent protein kinase 9 of Oryza sativa subsp. japonica (Rice).